The chain runs to 102 residues: Putative septation protein SpoVG 1 (102 aa).

This sequence belongs to the SpoVG family.

Functionally, could be involved in septation. This is Putative septation protein SpoVG 1 from Listeria innocua serovar 6a (strain ATCC BAA-680 / CLIP 11262).